The chain runs to 223 residues: MAGTFSLEPCSTSSSCNHQGKRSESSLLEKRLSEDSSRHWRLQKWASMSSADASRTLLERREEKAAAAENPLVFLCTRCRRPLGDSLTWVASQEDTNCILLRSVSSNVSVDKEQKLSKCRDEDGCILETLYCSGCSLSLGYVYRCTPKNLDYKRNLFCLSVEAVESYTLGSSEQQIVSEEEFFNLESRVEIEKSIKQMEDVLTVMQAKLWEVESKLSKAGRYS.

Positions 1-30 (MAGTFSLEPCSTSSSCNHQGKRSESSLLEK) are disordered. Residues 9 to 18 (PCSTSSSCNH) are compositionally biased toward polar residues. A compositionally biased stretch (basic and acidic residues) spans 21 to 30 (KRSESSLLEK). Phosphoserine occurs at positions 33, 36, and 37. One can recognise a Mis18 domain in the interval 71 to 169 (PLVFLCTRCR…SVEAVESYTL (99 aa)). Residues Cys-76, Cys-79, Cys-132, and Cys-135 each contribute to the Zn(2+) site. Lys-153 is covalently cross-linked (Glycyl lysine isopeptide (Lys-Gly) (interchain with G-Cter in SUMO2)). Ser-223 is modified (phosphoserine).

The protein belongs to the mis18 family. As to quaternary structure, homodimer, and heterodimer with OIP5/MIS18B. Identified in a complex containing MIS18A, OIP5/MIS18B, MIS18BP1, RBBP7 and RBBP4.

It localises to the nucleus. Its subcellular location is the chromosome. The protein resides in the centromere. In terms of biological role, required for recruitment of CENPA to centromeres and normal chromosome segregation during mitosis. This is Protein Mis18-alpha (Mis18a) from Rattus norvegicus (Rat).